The sequence spans 398 residues: Odorant receptor 24a (398 aa).

The Cytoplasmic segment spans residues 1–14; that stretch reads MLPRFLTASYPMER. The helical transmembrane segment at 15–31 threads the bilayer; the sequence is HYFMVPKFALSLIGFYP. The Extracellular portion of the chain corresponds to 32 to 46; that stretch reads EQKRTVLVKLWSFFN. The chain crosses the membrane as a helical span at residues 47-67; that stretch reads FFILTYGCYAEAYYGIHYIPI. Residues 68–74 lie on the Cytoplasmic side of the membrane; that stretch reads NIATALD. A helical transmembrane segment spans residues 75-95; it reads ALCPVASSILSLVKMVAIWWY. The Extracellular segment spans residues 96-124; sequence QDELRSLIERVRFLTEQQKSKRKLGYKKR. A helical membrane pass occupies residues 125-145; it reads FYTLATQLTFLLLCCGFCTST. The Cytoplasmic segment spans residues 146 to 199; it reads SYSVRHLIDNILRRTHGKDWIYETPFKMMFPDLLLRLPLYPITYILVHWHGYIT. The chain crosses the membrane as a helical span at residues 200–220; that stretch reads VVCFVGADGFFLGFCLYFTVL. The Extracellular segment spans residues 221–269; that stretch reads LLCLQDDVCDLLEVENIEKSPSEAEEARIVREMEKLVDRHNEVAELTER. Residues 270–290 form a helical membrane-spanning segment; that stretch reads LSGVMVEITLAHFVTSSLIIG. Over 291–295 the chain is Cytoplasmic; that stretch reads TSVVD. The helical transmembrane segment at 296 to 316 threads the bilayer; the sequence is ILLFSGLGIIVYVVYTCAVGV. Residues 317-398 are Extracellular-facing; sequence EIFLYCLGGS…SLIALAKSVI (82 aa).

The protein belongs to the insect chemoreceptor superfamily. Heteromeric odorant receptor channel (TC 1.A.69) family. Or1a subfamily. Interacts with Orco. Complexes exist early in the endomembrane system in olfactory sensory neurons (OSNs), coupling these complexes to the conserved ciliary trafficking pathway. Not expressed in either the antenna or maxillary palp.

Its subcellular location is the cell membrane. Its function is as follows. Odorant receptor which mediates acceptance or avoidance behavior, depending on its substrates. The odorant receptor repertoire encodes a large collection of odor stimuli that vary widely in identity, intensity, and duration. May form a complex with Orco to form odorant-sensing units, providing sensitive and prolonged odorant signaling and calcium permeability. Involved in the behavioral responses to pentanol, hexanol, octanol, nonanol, propyl acetate, butyl acetate, isoamyl acetate, methyl caproate, anisole, heptanal, 2-heptanone, r-carvone, and nonanoic acid. Also responds to pyrazines. The protein is Odorant receptor 24a (Or24a) of Drosophila melanogaster (Fruit fly).